The primary structure comprises 358 residues: Src kinase-associated phosphoprotein 2 (358 aa).

2 positions are modified to phosphoserine: serine 5 and serine 6. The disordered stretch occupies residues 62–88; that stretch reads ESQDKGDAEDGEEYDDPFAGPPDTISL. Tyrosine 75 carries the post-translational modification Phosphotyrosine. A phosphoserine mark is found at serine 87 and serine 90. Positions 116–219 constitute a PH domain; that stretch reads FVLKAGYLEK…WVQQLNFVLQ (104 aa). Phosphotyrosine is present on residues tyrosine 151 and tyrosine 197. Serine 223 bears the Phosphoserine mark. The interval 232–254 is disordered; the sequence is ERGELYDDVDHPLPSSSPTRSLP. The span at 243–253 shows a compositional bias: low complexity; it reads PLPSSSPTRSL. At tyrosine 260 the chain carries Phosphotyrosine. Phosphoserine occurs at positions 282 and 285. Residues 296 to 357 enclose the SH3 domain; the sequence is NYANFYQGLW…PKAYVMEMYD (62 aa).

This sequence belongs to the SKAP family. Interacts with FYB1, which is required for SKAP2 protein stability. Interacts with PTPNS1. Part of a complex consisting of SKAP2, FYB1 and PTPNS1. Part of a complex consisting of SKAP2, FYB1 and LILRB3. Interacts with LAT, GRB2, PTK2B and PRAM1. May interact with actin. May interact with FYN, HCK and LYN. Interacts with FASLG.

Its subcellular location is the cytoplasm. Its function is as follows. May be involved in B-cell and macrophage adhesion processes. In B-cells, may act by coupling the B-cell receptor (BCR) to integrin activation. May play a role in src signaling pathway. This is Src kinase-associated phosphoprotein 2 (SKAP2) from Bos taurus (Bovine).